The following is a 1221-amino-acid chain: RNA exonuclease 1 homolog (1221 aa).

The segment covering 37–46 has biased composition (gly residues); the sequence is RGSGAPGDGG. Residues 37–75 form a disordered region; the sequence is RGSGAPGDGGEAPPAAGLGYDPYNPELPKPPAQRENGTL. Residues 86-115 are a coiled coil; that stretch reads LELELVNQAIEAVRSEVELEQRRYRELLET. A disordered region spans residues 116 to 598; that stretch reads TREHRSAEAP…STSSAGADVD (483 aa). Arginine 191 bears the Omega-N-methylarginine mark. Serine 287, serine 289, and serine 358 each carry phosphoserine. The span at 357–369 shows a compositional bias: low complexity; it reads ASPAQVQSSQDGG. The segment covering 393–417 has biased composition (basic and acidic residues); that stretch reads AQGKDKTKDKGRGRPVEKPRADKKG. Phosphoserine is present on residues serine 459, serine 499, and serine 526. Over residues 492 to 501 the composition is skewed to basic and acidic residues; sequence LVERKARSLD. The interval 498–577 is interaction with ELOA; that stretch reads RSLDEGASQD…KRLKASPPPS (80 aa). Over residues 580-593 the composition is skewed to low complexity; the sequence is PSSSSSSSSSTSSA. Residue serine 610 is modified to Phosphoserine. 2 disordered regions span residues 619 to 692 and 735 to 775; these read IFNE…TAQE and HIPN…TRTL. Positions 627-648 are enriched in basic and acidic residues; it reads KTEDRGRLARQPPKEEKSEEKG. At serine 914 the chain carries Phosphoserine. In terms of domain architecture, Exonuclease spans 1060 to 1209; sequence IYALDCEMSY…EDAGACMHLV (150 aa).

The protein belongs to the REXO1/REXO3 family. In terms of assembly, interacts with TCEA2 and ELOA. In terms of tissue distribution, ubiquitously expressed.

It localises to the nucleus. Seems to have no detectable effect on transcription elongation in vitro. This chain is RNA exonuclease 1 homolog (REXO1), found in Homo sapiens (Human).